Reading from the N-terminus, the 575-residue chain is MDVRFYPAAAGDPAGLDFAQCLGYYGYSKLGNNNYMNMAEANNAFFAASEQTFHTPSLGDEEFEIPPITPPPESDPTLGMPDALLPFQTLSDPLPSQGTEFTPQFPPQSLDLPSITISRNLVEQDGVLHSNGLHMDQSHTQVSQYRQDPSLVMRSIVHMTDGARSGIMPPAQLTTINQSQLSAQLGLNLGGANVSHTSPSPPASKSATPSPSSSINEEDADDANRAIGEKRTAPDSGKKPKTPKKKKKKDPNEPQKPVSAYALFFRDTQAAIKGQNPNATFGEVSKIVASMWDSLGEEQKQVYKRKTEAAKKEYLKALAAYRASLVSKAAAESAEAQTIRSVQQTLASTNLTSSLLLNTSLSQHGTVPASPQTLPQSLPRSIAPKPLTMRLPMSQIVTSVTIAANMPSNIGAPLISSMGTTMVGSATSTQVSPSVQTQQHQMQLQQQQQQQQQMQQMQQQQLQQHQMHQQIQQQMQQQHFQHHMQQHLQQQQQQHLQQQLSQQQLQQQLQQHLQLQQLQHMQHQSQPSPRQHSPVTSQITSPIPAIGSPQPASQQHQPQIQSQTQTQVLPQVSIF.

Disordered regions lie at residues 189-258 and 516-575; these read LGGA…QKPV and QQLQ…VSIF. A compositionally biased stretch (low complexity) spans 195–214; it reads SHTSPSPPASKSATPSPSSS. Residues 222 to 238 are compositionally biased toward basic and acidic residues; it reads DANRAIGEKRTAPDSGK. Positions 239 to 249 are enriched in basic residues; that stretch reads KPKTPKKKKKK. Positions 254-322 form a DNA-binding region, HMG box; sequence PQKPVSAYAL…EYLKALAAYR (69 aa). Over residues 516–526 the composition is skewed to low complexity; it reads QQLQHMQHQSQ. Positions 527 to 541 are enriched in polar residues; the sequence is PSPRQHSPVTSQITS. Positions 548 to 575 are enriched in low complexity; sequence SPQPASQQHQPQIQSQTQTQVLPQVSIF.

As to quaternary structure, homodimer. Interacts (via HGM box) with CITED1 (via C-terminus); the interaction increases estrogen-response element (ERE)-dependent transcription and protection against cell death. Interacts with CREB1 (phosphorylated form). Interacts with CREB1; the interaction is not depolarization dependent. Interacts with CREBBP (via C-terminus).

The protein resides in the nucleus. Its function is as follows. Transcriptional coactivator of the p300/CBP-mediated transcription complex. Activates transactivation through cAMP response element (CRE) sites. Protects against cell death by inducing antiapoptotic and repressing pro-apoptotic transcripts. Stimulates transcription from the estrogen-responsive or BCL-2 promoters. Required for depolarization-induced transcription activation of the C-FOS promoter in neurons. Associates with chromatin to the estrogen-responsive C3 promoter region. This is TOX high mobility group box family member 3 (Tox3) from Mus musculus (Mouse).